Reading from the N-terminus, the 92-residue chain is Small ribosomal subunit protein uS19c (92 aa).

The protein belongs to the universal ribosomal protein uS19 family.

The protein localises to the plastid. Its subcellular location is the chloroplast. Its function is as follows. Protein S19 forms a complex with S13 that binds strongly to the 16S ribosomal RNA. This chain is Small ribosomal subunit protein uS19c, found in Nasturtium officinale (Watercress).